The following is a 189-amino-acid chain: Chitin synthase 1 (189 aa).

This sequence belongs to the chitin synthase family. Class I subfamily.

The protein resides in the cell membrane. It carries out the reaction [(1-&gt;4)-N-acetyl-beta-D-glucosaminyl](n) + UDP-N-acetyl-alpha-D-glucosamine = [(1-&gt;4)-N-acetyl-beta-D-glucosaminyl](n+1) + UDP + H(+). Polymerizes chitin, a structural polymer of the cell wall and septum, by transferring the sugar moiety of UDP-GlcNAc to the non-reducing end of the growing chitin polymer. The protein is Chitin synthase 1 (CHS1) of Ajellomyces capsulatus (Darling's disease fungus).